A 173-amino-acid chain; its full sequence is Ribosome maturation factor RimM (173 aa).

Residues 95–169 form the PRC barrel domain; the sequence is EGSYYFKDIL…RIEVTLLEGL (75 aa).

It belongs to the RimM family. In terms of assembly, binds ribosomal protein uS19.

The protein resides in the cytoplasm. An accessory protein needed during the final step in the assembly of 30S ribosomal subunit, possibly for assembly of the head region. Essential for efficient processing of 16S rRNA. May be needed both before and after RbfA during the maturation of 16S rRNA. It has affinity for free ribosomal 30S subunits but not for 70S ribosomes. The polypeptide is Ribosome maturation factor RimM (Lactobacillus gasseri (strain ATCC 33323 / DSM 20243 / BCRC 14619 / CIP 102991 / JCM 1131 / KCTC 3163 / NCIMB 11718 / NCTC 13722 / AM63)).